A 214-amino-acid polypeptide reads, in one-letter code: Dephospho-CoA kinase (214 aa).

A DPCK domain is found at 3 to 202 (KIGLTGGIGS…DRWLALAGAA (200 aa)). Position 11 to 16 (11 to 16 (GSGKSR)) interacts with ATP.

This sequence belongs to the CoaE family.

It localises to the cytoplasm. It carries out the reaction 3'-dephospho-CoA + ATP = ADP + CoA + H(+). It participates in cofactor biosynthesis; coenzyme A biosynthesis; CoA from (R)-pantothenate: step 5/5. Its function is as follows. Catalyzes the phosphorylation of the 3'-hydroxyl group of dephosphocoenzyme A to form coenzyme A. The chain is Dephospho-CoA kinase from Bordetella bronchiseptica (strain ATCC BAA-588 / NCTC 13252 / RB50) (Alcaligenes bronchisepticus).